Consider the following 207-residue polypeptide: Ribosomal RNA large subunit methyltransferase E (207 aa).

Residues Gly60, Trp62, Asp80, Asp96, and Asp121 each contribute to the S-adenosyl-L-methionine site. The active-site Proton acceptor is the Lys161.

It belongs to the class I-like SAM-binding methyltransferase superfamily. RNA methyltransferase RlmE family.

The protein localises to the cytoplasm. The catalysed reaction is uridine(2552) in 23S rRNA + S-adenosyl-L-methionine = 2'-O-methyluridine(2552) in 23S rRNA + S-adenosyl-L-homocysteine + H(+). In terms of biological role, specifically methylates the uridine in position 2552 of 23S rRNA at the 2'-O position of the ribose in the fully assembled 50S ribosomal subunit. In Thioalkalivibrio sulfidiphilus (strain HL-EbGR7), this protein is Ribosomal RNA large subunit methyltransferase E.